Consider the following 32-residue polypeptide: Trypsin inhibitor 4 (32 aa).

3 disulfides stabilise this stretch: cysteine 6–cysteine 23, cysteine 13–cysteine 25, and cysteine 19–cysteine 31.

Belongs to the protease inhibitor I7 (squash-type serine protease inhibitor) family.

It is found in the secreted. Its function is as follows. Inhibits trypsin. The protein is Trypsin inhibitor 4 of Cucurbita maxima (Pumpkin).